The following is a 248-amino-acid chain: Pulmonary surfactant-associated protein A (248 aa).

The signal sequence occupies residues 1–20; sequence MLLCSLTLTLILLAVSGTKC. In terms of domain architecture, Collagen-like spans 31–100; it reads GVPGIPGSPG…PGERGPPGPP (70 aa). The interval 34–105 is disordered; the sequence is GIPGSPGLPG…PPGPPAYPDE (72 aa). Positions 54–65 are enriched in pro residues; sequence PGPPGPIGPPGG. A compositionally biased stretch (basic and acidic residues) spans 84–93; the sequence is ERGDKGEPGE. The C-type lectin domain occupies 134–247; sequence VGEKVFSTNG…CLQYRLAICE (114 aa). 2 disulfides stabilise this stretch: C155/C246 and C224/C238. N207 is a glycosylation site (N-linked (GlcNAc...) asparagine). Ca(2+) contacts are provided by E215, R217, N234, and D235.

This sequence belongs to the SFTPA family. Oligomeric complex of 6 set of homotrimers.

It localises to the secreted. The protein resides in the extracellular space. Its subcellular location is the extracellular matrix. It is found in the surface film. In terms of biological role, in presence of calcium ions, it binds to surfactant phospholipids and contributes to lower the surface tension at the air-liquid interface in the alveoli of the mammalian lung and is essential for normal respiration. Enhances the expression of MYO18A/SP-R210 on alveolar macrophages. This chain is Pulmonary surfactant-associated protein A (SFTPA1), found in Equus caballus (Horse).